The primary structure comprises 393 residues: Succinate--CoA ligase [ADP-forming] subunit beta (393 aa).

Residues 9–237 form the ATP-grasp domain; the sequence is RDLFAKHGVP…KDAANPLEAA (229 aa). ATP contacts are provided by residues Lys-45, 52–54, Glu-92, Pro-95, and Glu-100; that span reads GRG. The Mg(2+) site is built by Asn-192 and Asp-206. Residues Asn-257 and 319 to 321 contribute to the substrate site; that span reads GIT.

Belongs to the succinate/malate CoA ligase beta subunit family. Heterotetramer of two alpha and two beta subunits. The cofactor is Mg(2+).

It carries out the reaction succinate + ATP + CoA = succinyl-CoA + ADP + phosphate. It catalyses the reaction GTP + succinate + CoA = succinyl-CoA + GDP + phosphate. It functions in the pathway carbohydrate metabolism; tricarboxylic acid cycle; succinate from succinyl-CoA (ligase route): step 1/1. Succinyl-CoA synthetase functions in the citric acid cycle (TCA), coupling the hydrolysis of succinyl-CoA to the synthesis of either ATP or GTP and thus represents the only step of substrate-level phosphorylation in the TCA. The beta subunit provides nucleotide specificity of the enzyme and binds the substrate succinate, while the binding sites for coenzyme A and phosphate are found in the alpha subunit. This Streptomyces griseus subsp. griseus (strain JCM 4626 / CBS 651.72 / NBRC 13350 / KCC S-0626 / ISP 5235) protein is Succinate--CoA ligase [ADP-forming] subunit beta.